We begin with the raw amino-acid sequence, 562 residues long: Transcriptional adapter 2A (562 aa).

A ZZ-type zinc finger spans residues 91–146 (KDANRCATCRCSLTEPYIKCSECLDTLLCLQCFSRGKEAFSHRNNHAYIIVRDNIQ). Zn(2+) contacts are provided by Cys-96, Cys-99, Cys-110, Cys-113, Cys-119, Cys-122, His-132, and His-136. The SANT domain maps to 154–198 (WTARDERILLKTLRTHGYGNWEAVSQALDQRHEPAEVRRHYHDCY). In terms of domain architecture, SWIRM spans 471-562 (CLTPTEYNFS…GHISRPPSYG (92 aa)).

Component of the Ada2a-containing (ATAC) complex composed of at least Ada2a, Atac1, Hcf, Ada3, Gcn5, Mocs2B, Charac-14, Atac3, Atac2, NC2beta and wds. Component of a complex that does not include Gcn5 or Ada3.

Its subcellular location is the nucleus. The protein localises to the chromosome. In terms of biological role, component of the histone acetyltransferase (HAT) complex ATAC; predominantly involved in acetylation of histone H4, including at Lys-6 (H4K5ac) and Lys-13 (H4K12ac). May be part of several different complexes, including Gcn5-independent complexes involved in RNA polymerase II-dependent transcription. The sequence is that of Transcriptional adapter 2A from Drosophila melanogaster (Fruit fly).